The chain runs to 298 residues: MANQGGFKKKTFGWVIKDLQTHRRCSVPILIGDSYWRLVALPNENGYFSLFLEVNMELIPCGWRRYVEFRMTIVNHISPIHSVDKKGWRWFDENTKNWGFKDMIPAVILNNVNVGFLLNGEITIIAEVEVHEFIDTLNASQVEELSDDSSEDLQNKDNVTIEVNGFQVLDSQVDQVNAIFEKHPDLISNFSLKNQHIRNAYMHALLDLTKTLSKSTKELTVEDMNEADNTITDLIKAGLNLDWLRQKFDQALEKQIAYDTRIGELEKQVKKRKLAVTELEADLEKEKAAASASLMLFD.

An MATH domain is found at 9–128; that stretch reads KKTFGWVIKD…NGEITIIAEV (120 aa). The stretch at 240-288 forms a coiled coil; it reads NLDWLRQKFDQALEKQIAYDTRIGELEKQVKKRKLAVTELEADLEKEKA.

This chain is MATH domain and coiled-coil domain-containing protein At3g58280, found in Arabidopsis thaliana (Mouse-ear cress).